The primary structure comprises 208 residues: N-(5'-phosphoribosyl)anthranilate isomerase (208 aa).

Belongs to the TrpF family.

The catalysed reaction is N-(5-phospho-beta-D-ribosyl)anthranilate = 1-(2-carboxyphenylamino)-1-deoxy-D-ribulose 5-phosphate. Its pathway is amino-acid biosynthesis; L-tryptophan biosynthesis; L-tryptophan from chorismate: step 3/5. This is N-(5'-phosphoribosyl)anthranilate isomerase from Neisseria meningitidis serogroup A / serotype 4A (strain DSM 15465 / Z2491).